Consider the following 295-residue polypeptide: Protein NEOXANTHIN-DEFICIENT 1 (295 aa).

Positions 221–251 are disordered; sequence PAKVSGPSESDADKENSSEDQSSNVESVSRV.

Required for neoxanthin biosynthesis. Probably not involved directly in the enzymatic conversion of violaxanthin to neoxanthin. Is necessary but not sufficient for neoxanthin synthesis. Seems not required for abscisic acid (ABA) biosynthesis in response to drought stress. The protein is Protein NEOXANTHIN-DEFICIENT 1 of Solanum lycopersicum (Tomato).